The sequence spans 587 residues: 65-kDa microtubule-associated protein 1 (587 aa).

Coiled coils occupy residues 46–84, 151–181, 234–257, 290–317, and 461–489; these read QECLDVYKRKVEQAAKSRAELLQTLSDANAELSSLTMSL, DESDLSLKKLDDFQSQLQELQKEKSDRLRKV, LTLKDDKKQRLQKLQELATQLIDL, ALARDLIEQAEVEVDRLDQLKASRMKEI, and AMLDEYGMLRQEREEEKRRLREQKKVQEQ. A compositionally biased stretch (basic and acidic residues) spans 474–494; sequence EEEKRRLREQKKVQEQPHVEQ. The interval 474-587 is disordered; that stretch reads EEEKRRLREQ…AADHQVPASP (114 aa). Serine 503 carries the post-translational modification Phosphoserine. Residue threonine 526 is modified to Phosphothreonine. Residues 531 to 542 are compositionally biased toward polar residues; the sequence is LSLNANQNGSRS. Phosphoserine is present on residues serine 532 and serine 540. Phosphothreonine occurs at positions 543 and 552. Over residues 543 to 553 the composition is skewed to basic and acidic residues; the sequence is TAKEAGRRETL. Serine 573, serine 576, and serine 586 each carry phosphoserine.

This sequence belongs to the MAP65/ASE1 family. In terms of assembly, forms dimer. Binds to MT, mostly with coaligned MT, both between parallel or antiparallel, forming thick bundles. Interacts with the alpha-tubulin subunit of the tubulin heterodimer. Bundles polymerized MT via the formation of 25-nm crossbridges at specific stages of the cell cycle (e.g. bundles microtubules in interphase, anaphase and telophase but does not bind microtubules in prophase or metaphase), at the plus-end, the minus-end, or along the entire length of MT, and along phragmoplast MT. Interacts with SH3P1 and MPK4. In terms of processing, basal phosphorylation at all stages of the cell cycle. MT-binding properties inhibited by hyperphosphorylation mediated by CDKs and/or MAPKs (e.g. ANP2, ANP3, MPK4 and MPK6) during prometaphase and metaphase. Expressed in all organs and tissues with the exception of sepals and anthers. Bound to subsets of microtubules in the cells of root epidermis, hypocotyl and cotyledons (at protein level).

It localises to the nucleus. The protein localises to the cytoplasm. It is found in the cytoskeleton. The protein resides in the spindle. Its subcellular location is the phragmoplast. It localises to the cell cortex. Functionally, microtubule-associated protein that bundle and stabilize adjacent microtubules (MT) of the cell cortex. Enhances MT nucleation. Can also bind to tubulin dimers and promotes their polymerization. Confers MT resistance to the drug propyzamide and cold conditions. Plays a role in the central spindle at anaphase to early cytokinesis but is not essential at the midline of the phragmoplast at later stages. Represses metaphase spindle organization and the transition to anaphase in dephosphorylated active form. Promotes the formation of a planar network of antiparallel microtubules. May be involved in stomatal movement modulation by regulating the dynamic and arrangement of cortical MT. The polypeptide is 65-kDa microtubule-associated protein 1 (MAP65-1) (Arabidopsis thaliana (Mouse-ear cress)).